A 2506-amino-acid chain; its full sequence is Highly reducing polyketide synthase rstn3 (2506 aa).

Residues 8–436 (VEPIAIVGMA…GANAHAILDA (429 aa)) enclose the Ketosynthase family 3 (KS3) domain. Catalysis depends on for beta-ketoacyl synthase activity residues Cys-183, His-318, and His-358. The Malonyl-CoA:ACP transacylase (MAT) domain occupies 547–875 (FIFTGQGAQW…KMVGSLFLSG (329 aa)). The tract at residues 941–1050 (HDLLGSRLPG…ASDQSISSVE (110 aa)) is N-terminal hotdog fold. Residues 941–1212 (HDLLGSRLPG…FSSLETAVGE (272 aa)) form the PKS/mFAS DH domain. His-973 functions as the Proton acceptor; for dehydratase activity in the catalytic mechanism. A C-terminal hotdog fold region spans residues 1060–1212 (NKDSYDRRWY…FSSLETAVGE (153 aa)). Asp-1125 acts as the Proton donor; for dehydratase activity in catalysis. The interval 1263–1563 (VTRLAIRSSA…SGADIVLDDY (301 aa)) is methyltransferase (CMet) domain. The Enoyl reductase (ER) domain occupies 1827–2093 (GRVDSFYFKE…QDDYVGRVVL (267 aa)). Residues 2116-2296 (ASYLLIGCLG…QATSIALGMI (181 aa)) enclose the Ketoreductase (KR) domain. A Carrier domain is found at 2423–2501 (AVKVTTLGLI…DLAEKVVALA (79 aa)). Ser-2460 bears the O-(pantetheine 4'-phosphoryl)serine mark.

The cofactor is pantetheine 4'-phosphate.

It participates in antifungal biosynthesis. Highly reducing polyketide synthase; part of the gene cluster that mediates the biosynthesis of the tetrahydropyranyl antifungal agent restricticin that acts as an inhibitor of CYP51 and blocks the ergosterol biosynthesis. The highly reducing polyketide synthase rstn3, the short chain dehydrogenase rstn4, the cyclase rstn5, the FAD-dependent monooxygenase rstn6 and the enoylreductase rstn7 are required to generate the first stable intermediate desmethylrestrictinol. Rstn3 with rstn7 biosynthesize the first polyketide chain intermediate that is reduced by rstn4, followed by epoxidation by rstn6 before 6-endo cyclization via epoxide opening by rstn5 leads to desmethylrestrictinol. The methyltransferase rstn1 then catalyzes the C4 O-methylation of desmethylrestrictinol to produce restrictinol, and the nonribosomal peptide synthetase rstn8 catalyzes the C3 esterification of restrictinol with glycine that leads to restricticin. This Aspergillus nomiae NRRL (strain ATCC 15546 / NRRL 13137 / CBS 260.88 / M93) protein is Highly reducing polyketide synthase rstn3.